Consider the following 160-residue polypeptide: CXXC motif containing zinc binding protein (160 aa).

The Zn(2+) site is built by cysteine 33, cysteine 36, cysteine 67, and cysteine 70. Residue serine 75 is modified to Phosphoserine.

The protein belongs to the UPF0587 family. As to quaternary structure, monomer.

The sequence is that of CXXC motif containing zinc binding protein from Rattus norvegicus (Rat).